We begin with the raw amino-acid sequence, 360 residues long: Lipid-A-disaccharide synthase (360 aa).

Belongs to the LpxB family.

The enzyme catalyses a lipid X + a UDP-2-N,3-O-bis[(3R)-3-hydroxyacyl]-alpha-D-glucosamine = a lipid A disaccharide + UDP + H(+). Its pathway is bacterial outer membrane biogenesis; LPS lipid A biosynthesis. In terms of biological role, condensation of UDP-2,3-diacylglucosamine and 2,3-diacylglucosamine-1-phosphate to form lipid A disaccharide, a precursor of lipid A, a phosphorylated glycolipid that anchors the lipopolysaccharide to the outer membrane of the cell. The polypeptide is Lipid-A-disaccharide synthase (Helicobacter pylori (strain G27)).